The sequence spans 186 residues: ATP-dependent protease subunit HslV (186 aa).

Residue threonine 13 is part of the active site. 3 residues coordinate Na(+): alanine 167, cysteine 170, and threonine 173.

The protein belongs to the peptidase T1B family. HslV subfamily. A double ring-shaped homohexamer of HslV is capped on each side by a ring-shaped HslU homohexamer. The assembly of the HslU/HslV complex is dependent on binding of ATP.

It localises to the cytoplasm. It carries out the reaction ATP-dependent cleavage of peptide bonds with broad specificity.. Allosterically activated by HslU binding. Functionally, protease subunit of a proteasome-like degradation complex believed to be a general protein degrading machinery. The polypeptide is ATP-dependent protease subunit HslV (Allorhizobium ampelinum (strain ATCC BAA-846 / DSM 112012 / S4) (Agrobacterium vitis (strain S4))).